Here is an 898-residue protein sequence, read N- to C-terminus: MSEHDKDLPLRADLACLDRLLSEVVGEQEGAVVSGAVQAIALRRGDERSHPLPQLAPEAAASLLRACGLYAQLFNIAEDLHHNRRRRAHQLAGSAPQQGSLPRALQRLRQDGVSFHALHQLLSHAKVGAILTAHPTEVQRQSVLDGHRAVRRFLSQLNAADLTPEEREALEAKLKRAILALWQTSEIRHFKMTVRDEITNGVAYHPLAFFEALPALYRRLEREIGQLWGEEARLPSFIRVGSWIGGDRDGNPNVDAGLLRHAVTRQSQQAFEYYLQELKSLYRELSLSSRLVEAGAEVLALAEQSPDQAVSRGEEPYRRALATMQGKLRATARLRGVELACRWDERAPYRDHRELIQDLASLSASLRAHGSALLADGRLSRLIRSVDVFGFFLMPLDLRQHAAVHEGVVAELFSAAGLEEYRALDEAARVRVLIRELATPRLLFSPYLRYGEQAEKELAIFREAAAIQRDFGVEAIGQCIISNCASVSDILALALLCKEAGLIRLEDGQPRASVNLVPLFETIADLENSEAVMRALFALPWYKQLLDSRERVQEVMLGYSDSNKDGGYLTSQWQLWQAETRLVKVFADAGARLQLFHGRGGSVGRGGGPSYEAIVAQPAGSVAGRIRITEQGEVITAKYSDPAIAGRNLEALVAATLEASLGNIPGGEVDTALFDELSASAFAAYRALVETPGFMQYFLEATPVTAIARLNIGSRPASRKSLSSIGDLRAIPWVFSWSQSRLMLPGWFGVGSAVAAYVQKHGDAGLAKLQHLYRHSPFFQVMLSNMEQVLAKADLGIARRFSELVADRELAARLFGAIEAEWRKTHDAFFAITGQAELLEGNPTLRRSLETRLPFLDALGLLQADLLARLRAEPDDEDTLYAIHLTINGTSAGLRNTG.

Residues His134 and Lys564 contribute to the active site.

This sequence belongs to the PEPCase type 1 family. Requires Mg(2+) as cofactor.

It carries out the reaction oxaloacetate + phosphate = phosphoenolpyruvate + hydrogencarbonate. Functionally, forms oxaloacetate, a four-carbon dicarboxylic acid source for the tricarboxylic acid cycle. In Chromobacterium violaceum (strain ATCC 12472 / DSM 30191 / JCM 1249 / CCUG 213 / NBRC 12614 / NCIMB 9131 / NCTC 9757 / MK), this protein is Phosphoenolpyruvate carboxylase.